The primary structure comprises 1097 residues: MSSSAIQVAKTATYLPDLVEVQRASFKWFLDQGLIEELESFSPITDYTGKLELHFIGSEYRLKRPRHDVEEAKRRDATFASQMYVTCRLVNKETGEIKEQEVFIGELPLMTERGTFIINGAERVIVNQIVRSPGVYFKDEMDKNGRRTYNASVIPNRGAWLKFETDKNDLLHVRVDKTRKINAHVLMRAMGLSDNDVLDKLRHPEFYKKSIDAANDEGISSEDQALLELYKKLRPGEPPSVSGGQQLLQTRFFDPKRYDLGRVGRYKINKKLRLTIPDTVRTLTHEDVLSTLDYLINLELDVGGASLDDIDHLGNRRVRSVGELLQNQVRVGLNRLERIIKERMTVGETDSLTPAQLVNPKPLVAAIKEFFGSSQLSQFMDQTNPLAELTHKRRISALGPGGLTRERAGFAVRDIHPSHYGRLCPIETPEGPNAGLINSLATHARVNEYGFIETPFWKVEYGVVLKDGDPIYLSADREDEVRVAPGDVATEDDGRISADLIPVRYRQDFEKVPPEQVDYVALSPVQVISVATSLIPFLEHDDANRALMGSNMQRQAVPLLRPERALVGTGLETQVARDSGMVPISRVNGTVTYVDANAIVVQDEDGNDHTHFLQKYQRSNQDTCLNQRPIVRCGDPVIVGQVMADGSACEGGEIALGQNVLIAYMPWEGYNYEDALLVSERLVTDDLYTSVHIEKYEIEARQTKLGPEEITREIPNVAEESLGNLDEMGIIRVGAFVESGDILVGKVTPKGESDQPPEEKLLRAIFGEKARDVRDNSLRVPGTERGRVVDVRIYTREQGDELPPGANMVVRVYVAQRRKIQVGDKMAGRHGNKGIISRILPREDMPYLPDGTPVDIVLNPLGVPSRMNVGQVFELLMGWAASNLDCRVRIVPFDEMHGAEKSQQTVETFLKEAAKQPGKGWVYDPEDPGKLQLRDGRTGLPFDQPVAVGYSHFLKLVHLVDDKIHARSTGPYSLVTQQPLGGKAQQGGQRLGEMEVWALEAYGAAYTLQELLTVKSDDMQGRNEALNAIVKGKPIPRPGTPESFKVLMRELQSLGLDIAVYTDEGKEVDLMQDVNPRRSTPSRPTYESLGVADYDED.

A disordered region spans residues glutamine 1072–aspartate 1097.

This sequence belongs to the RNA polymerase beta chain family. In cyanobacteria the RNAP catalytic core is composed of 2 alpha, 1 beta, 1 beta', 1 gamma and 1 omega subunit. When a sigma factor is associated with the core the holoenzyme is formed, which can initiate transcription.

It carries out the reaction RNA(n) + a ribonucleoside 5'-triphosphate = RNA(n+1) + diphosphate. DNA-dependent RNA polymerase catalyzes the transcription of DNA into RNA using the four ribonucleoside triphosphates as substrates. This is DNA-directed RNA polymerase subunit beta from Synechococcus sp. (strain CC9605).